The following is a 301-amino-acid chain: UDP-N-acetylenolpyruvoylglucosamine reductase (301 aa).

In terms of domain architecture, FAD-binding PCMH-type spans valine 30–glycine 194. Residue arginine 173 is part of the active site. Catalysis depends on serine 223, which acts as the Proton donor. Residue glutamate 293 is part of the active site.

This sequence belongs to the MurB family. Requires FAD as cofactor.

Its subcellular location is the cytoplasm. The catalysed reaction is UDP-N-acetyl-alpha-D-muramate + NADP(+) = UDP-N-acetyl-3-O-(1-carboxyvinyl)-alpha-D-glucosamine + NADPH + H(+). Its pathway is cell wall biogenesis; peptidoglycan biosynthesis. In terms of biological role, cell wall formation. In Streptococcus pneumoniae (strain Hungary19A-6), this protein is UDP-N-acetylenolpyruvoylglucosamine reductase.